Reading from the N-terminus, the 285-residue chain is Nurim (285 aa).

Topologically, residues 1–16 (MSANVQVSGQLSSGPS) are nuclear. Residues 17 to 44 (LPACIVLSAVSLLCFVAGFGTGAEFVRF) form a helical membrane-spanning segment. Residues 45 to 74 (LSFGAIFRNISGGLDGEIPLTWSEAIRNTQ) are Perinuclear space-facing. The helical transmembrane segment at 75–96 (FQCCIGIDIGLLFLFVLQHSLM) threads the bilayer. The Nuclear segment spans residues 97–113 (AWTAVKKNVLHVFGVLQ). A helical membrane pass occupies residues 114–130 (RSIYILCTALSLQVLMR). Over 131–149 (FWQPCPHGPYLWNVSSDPW) the chain is Perinuclear space. A helical membrane pass occupies residues 150–180 (SAWLPLLCALVHTISWLLIFSVLLIFDYAEL). Residues 181-207 (MGIKQVYYFCLGMGDPLSHKSPRVARL) are Nuclear-facing. Residues 208-226 (YAHLRHPIYLELLLILWAV) traverse the membrane as a helical segment. Residues 227–232 (PCLPPD) are Perinuclear space-facing. A helical membrane pass occupies residues 233-250 (RLILAIFFTLYLSLVHRL). Topologically, residues 251 to 285 (DVQDYAYLRSQLEKKFLLFSREEASAVGGQIRKNN) are nuclear.

The protein belongs to the nurim family.

It is found in the nucleus inner membrane. The protein is Nurim (nrm) of Xenopus laevis (African clawed frog).